A 751-amino-acid polypeptide reads, in one-letter code: Amyloid-beta precursor protein (751 aa).

The first 17 residues, 1 to 17 (MLPGLALLLLAAWTARA), serve as a signal peptide directing secretion. Topologically, residues 18–682 (LEVPTDGNAG…AEDVGSNKGA (665 aa)) are extracellular. A GFLD subdomain region spans residues 28 to 123 (LLAEPQIAMF…PYRCLVGEFV (96 aa)). Residues 28-189 (LLAEPQIAMF…RGVEFVCCPL (162 aa)) form the E1 domain. 6 disulfides stabilise this stretch: Cys-38–Cys-62, Cys-73–Cys-117, Cys-98–Cys-105, Cys-133–Cys-187, Cys-144–Cys-174, and Cys-158–Cys-186. A heparin-binding site is contributed by 96 to 110 (NWCKRDRKQCKTHPH). Residues 131 to 189 (DKCKFLHQERMDVCETHLHWHTVAKETCSEKSTNLHDYGMLLPCGIDKFRGVEFVCCPL) are cuBD subdomain. Cu(2+) contacts are provided by His-147, His-151, and Tyr-168. The zinc-binding stretch occupies residues 181–188 (GVEFVCCP). Zn(2+) is bound by residues Glu-183, Cys-186, and Cys-187. The interval 195 to 284 (HVDSADAEED…TTTTTTESVE (90 aa)) is disordered. Residues Ser-198 and Ser-206 each carry the phosphoserine; by CK1 and CK2 modification. A sulfotyrosine mark is found at Tyr-217 and Tyr-262. The span at 228 to 264 (VAEEEEVAEVEEEEADDDEDDEDGDEVEEEAEEPYEE) shows a compositional bias: acidic residues. The segment covering 268-281 (RTTSIATTTTTTTE) has biased composition (low complexity). 3 disulfides stabilise this stretch: Cys-291–Cys-341, Cys-300–Cys-324, and Cys-316–Cys-337. In terms of domain architecture, BPTI/Kunitz inhibitor spans 291–341 (CSEQAETGPCRAMISRWYFDVTEGKCAPFFYGGCGGNRNNFDTEEYCMAVC). Heparin-binding regions lie at residues 316-344 (CAPF…CGSV) and 363-428 (PGDE…QEAA). Position 336 is a sulfotyrosine (Tyr-336). An OX-2 motif is present at residues 344–346 (VIP). An E2 domain is found at 355–546 (AVDKYLETPG…EEIQDEVDEL (192 aa)). Residue Ser-422 is modified to Phosphoserine. A Phosphotyrosine modification is found at Tyr-478. The tract at residues 504-521 (AAQIRSQVMTHLRVIYER) is collagen-binding. Residues Asn-523 and Asn-552 are each glycosylated (N-linked (GlcNAc...) asparagine). Positions 658, 662, 665, and 666 each coordinate Cu(2+). 4 residues coordinate Zn(2+): His-658, Tyr-662, His-665, and His-666. The segment at 676–703 (VGSNKGAIIGLMVGGVVIATVIVITLVM) is interaction with PSEN1. A helical membrane pass occupies residues 683–703 (IIGLMVGGVVIATVIVITLVM). At 704 to 751 (LKKKQYTSIHHGVVEVDAAVTPEERHLSKMQQNGYENPTYKFFEQMQN) the chain is on the cytoplasmic side. A Basolateral sorting signal motif is present at residues 705-715 (KKKQYTSIHHG). Thr-710 carries the phosphothreonine modification. Ser-711 is modified (phosphoserine; by APP-kinase I). An interaction with G(o)-alpha region spans residues 713-732 (HHGVVEVDAAVTPEERHLSK). A Phosphothreonine; by CDK5 and MAPK10 modification is found at Thr-724. A required for the interaction with KIF5B and for anterograde transport in axons region spans residues 737–751 (GYENPTYKFFEQMQN). Residue Tyr-738 is modified to Phosphotyrosine; by ABL1. A YENPXY motif; contains endocytosis signal motif is present at residues 738–743 (YENPTY). Residue Lys-744 forms a Glycyl lysine isopeptide (Lys-Gly) (interchain with G-Cter in ubiquitin) linkage.

It belongs to the APP family. As to quaternary structure, binds, via its C-terminus, to the PID domain of several cytoplasmic proteins, including APBB family members, the APBA family, MAPK8IP1, SHC1 and NUMB and DAB1. Binding to DAB1 inhibits its serine phosphorylation. Interacts (via NPXY motif) with DAB2 (via PID domain); the interaction is impaired by tyrosine phosphorylation of the NPXY motif. Also interacts with GPCR-like protein BPP, APPBP1, IB1, KNS2 (via its TPR domains), APPBP2 (via BaSS) and DDB1. In vitro, it binds MAPT via the MT-binding domains. Associates with microtubules in the presence of ATP and in a kinesin-dependent manner. Interacts, through a C-terminal domain, with GNAO1. Amyloid-beta protein 42 binds CHRNA7 in hippocampal neurons. Amyloid-beta associates with HADH2. Interacts with CPEB1, ANKS1B and AGER. Interacts with ITM2B. Interacts with ITM2C. Interacts with IDE. Can form homodimers; dimerization is enhanced in the presence of Cu(2+) ions. Can form homodimers; this is promoted by heparin binding. Amyloid-beta protein 40 interacts with S100A9. CTF-alpha product of APP interacts with GSAP. Isoform APP695 interacts with SORL1 (via N-terminal ectodomain); this interaction retains APP in the trans-Golgi network and reduces processing into soluble APP-alpha and amyloid-beta peptides. Isoform APP770 interacts with SORL1. The C99 fragment also interacts with SORL1. Interacts with PLD3. Interacts with VDAC1. Interacts with NSG1; could regulate APP processing. Amyloid-beta protein 42 interacts with FPR2. Interacts (via transmembrane region) with PSEN1; the interaction is direct. Interacts with LRRK2. Interacts (via cytoplasmic domain) with KIF5B. Interacts (via C-terminus) with APBB2/FE65L1 (via C-terminus). Interacts (via intracellular domain) with APBB3. Proteolytically processed under normal cellular conditions. Cleavage either by alpha-secretase, beta-secretase or theta-secretase leads to generation and extracellular release of soluble APP peptides, S-APP-alpha and S-APP-beta, and the retention of corresponding membrane-anchored C-terminal fragments, C80, C83 and C99. Subsequent processing of C80 and C83 by gamma-secretase yields P3 peptides. This is the major secretory pathway and is non-amyloidogenic. Alternatively, presenilin/nicastrin-mediated gamma-secretase processing of C99 releases the amyloid-beta proteins, amyloid-beta protein 40 and amyloid-beta protein 42, major components of amyloid plaques, and the cytotoxic C-terminal fragments, gamma-CTF(50), gamma-CTF(57) and gamma-CTF(59). PSEN1 cleavage is more efficient with C83 than with C99 as substrate (in vitro). Amyloid-beta protein 40 and Amyloid-beta protein 42 are cleaved by ACE. Many other minor amyloid-beta peptides, amyloid-beta 1-X peptides, are found in cerebral spinal fluid (CSF) including the amyloid-beta X-15 peptides, produced from the cleavage by alpha-secretase. Post-translationally, proteolytically cleaved by caspases during neuronal apoptosis. Cleavage at Asp-720 by either caspase-3, -8 or -9 results in the production of the neurotoxic C31 peptide and the increased production of amyloid-beta peptides. In terms of processing, N- and O-glycosylated. Phosphorylation in the C-terminal on tyrosine, threonine and serine residues is neuron-specific. Phosphorylation can affect APP processing, neuronal differentiation and interaction with other proteins. Phosphorylated on Thr-724 in neuronal cells by Cdc5 kinase and Mapk10, in dividing cells by Cdc2 kinase in a cell-cycle dependent manner with maximal levels at the G2/M phase and, in vitro, by GSK-3-beta. The Thr-724 phosphorylated form causes a conformational change which reduces binding of Fe65 family members. In dopaminergic (DA) neurons, phosphorylation on Thr-724 by LRKK2 promotes the production and the nuclear translocation of the APP intracellular domain (AICD) which induces DA neuron apoptosis. Phosphorylation on Tyr-738 is required for SHC binding. Phosphorylated in the extracellular domain by casein kinases on both soluble and membrane-bound APP. This phosphorylation is inhibited by heparin. Post-translationally, trophic-factor deprivation triggers the cleavage of surface APP by beta-secretase to release sAPP-beta which is further cleaved to release an N-terminal fragment of APP (N-APP). In terms of processing, amyloid-beta peptides are degraded by IDE. Sulfated on tyrosine residues.

It is found in the cell membrane. Its subcellular location is the membrane. The protein resides in the perikaryon. The protein localises to the cell projection. It localises to the growth cone. It is found in the clathrin-coated pit. Its subcellular location is the early endosome. The protein resides in the cytoplasmic vesicle. The protein localises to the endoplasmic reticulum. It localises to the golgi apparatus. It is found in the secreted. Its subcellular location is the cell surface. The protein resides in the nucleus. The protein localises to the cytoplasm. Functions as a cell surface receptor and performs physiological functions on the surface of neurons relevant to neurite growth, neuronal adhesion and axonogenesis. Interaction between APP molecules on neighboring cells promotes synaptogenesis. Involved in cell mobility and transcription regulation through protein-protein interactions. Can promote transcription activation through binding to APBB1-KAT5 and inhibit Notch signaling through interaction with Numb. Couples to apoptosis-inducing pathways such as those mediated by G(o) and JIP. Inhibits G(o)-alpha ATPase activity. Acts as a kinesin I membrane receptor, mediating the axonal transport of beta-secretase and presenilin 1. By acting as a kinesin I membrane receptor, plays a role in axonal anterograde transport of cargo towards synapses in axons. May be involved in copper homeostasis/oxidative stress through copper ion reduction. In vitro, copper-metallated APP induces neuronal death directly or is potentiated through Cu(2+)-mediated low-density lipoprotein oxidation. Can regulate neurite outgrowth through binding to components of the extracellular matrix such as heparin and collagen I and IV. Induces a AGER-dependent pathway that involves activation of p38 MAPK, resulting in internalization of amyloid-beta peptide and mitochondrial dysfunction in cultured cortical neurons. Provides Cu(2+) ions for GPC1 which are required for release of nitric oxide (NO) and subsequent degradation of the heparan sulfate chains on GPC1. Its function is as follows. Amyloid-beta peptides are lipophilic metal chelators with metal-reducing activity. Binds transient metals such as copper, zinc and iron. In terms of biological role, the gamma-CTF peptides as well as the caspase-cleaved peptides, including C31, are potent enhancers of neuronal apoptosis. In Saimiri sciureus (Common squirrel monkey), this protein is Amyloid-beta precursor protein.